A 447-amino-acid polypeptide reads, in one-letter code: Putative branched-chain amino acid carrier protein SH1502 (447 aa).

The next 13 helical transmembrane spans lie at 6 to 26 (WIVG…IFPP), 40 to 60 (VIAF…VGAL), 74 to 94 (PKFS…LFAI), 116 to 136 (LVLF…CINP), 143 to 163 (IGSL…IKGF), 193 to 213 (GYLT…VNAI), 229 to 249 (VMSG…LGFI), 270 to 287 (VGAY…GVFG), 290 to 310 (LLGI…IVSV), 328 to 348 (IFFT…VISM), 350 to 370 (VPVL…ILLA), 382 to 402 (IPIA…NGWV), and 417 to 437 (LEWF…AKFV).

Belongs to the branched chain amino acid transporter family.

It is found in the cell membrane. Component of the transport system for branched-chain amino acids (leucine, isoleucine and valine), which is coupled to a proton motive force. The chain is Putative branched-chain amino acid carrier protein SH1502 from Staphylococcus haemolyticus (strain JCSC1435).